The chain runs to 141 residues: Nucleoside diphosphate kinase (141 aa).

Residues Lys11, Phe59, Arg87, Thr93, Arg104, and Asn114 each contribute to the ATP site.

Belongs to the NDK family. As to quaternary structure, homotetramer. Requires Mg(2+) as cofactor.

The protein resides in the cytoplasm. It catalyses the reaction a 2'-deoxyribonucleoside 5'-diphosphate + ATP = a 2'-deoxyribonucleoside 5'-triphosphate + ADP. The enzyme catalyses a ribonucleoside 5'-diphosphate + ATP = a ribonucleoside 5'-triphosphate + ADP. Functionally, major role in the synthesis of nucleoside triphosphates other than ATP. The ATP gamma phosphate is transferred to the NDP beta phosphate via a ping-pong mechanism, using a phosphorylated active-site intermediate. The chain is Nucleoside diphosphate kinase from Saccharophagus degradans (strain 2-40 / ATCC 43961 / DSM 17024).